A 402-amino-acid polypeptide reads, in one-letter code: Phosphoglycerate kinase (402 aa).

Substrate-binding positions include 24–26 (DFN), Arg-41, 64–67 (HMGR), Arg-123, and Arg-156. Residues Lys-207, Gly-298, Glu-329, and 358–361 (GGDS) contribute to the ATP site.

The protein belongs to the phosphoglycerate kinase family. As to quaternary structure, monomer.

It is found in the cytoplasm. It catalyses the reaction (2R)-3-phosphoglycerate + ATP = (2R)-3-phospho-glyceroyl phosphate + ADP. It functions in the pathway carbohydrate degradation; glycolysis; pyruvate from D-glyceraldehyde 3-phosphate: step 2/5. The polypeptide is Phosphoglycerate kinase (Microcystis aeruginosa (strain NIES-843 / IAM M-2473)).